The sequence spans 293 residues: 4-hydroxy-tetrahydrodipicolinate synthase (293 aa).

Thr47 is a pyruvate binding site. Tyr135 functions as the Proton donor/acceptor in the catalytic mechanism. Lys163 functions as the Schiff-base intermediate with substrate in the catalytic mechanism. Val205 provides a ligand contact to pyruvate.

The protein belongs to the DapA family. As to quaternary structure, homotetramer; dimer of dimers.

The protein localises to the cytoplasm. It carries out the reaction L-aspartate 4-semialdehyde + pyruvate = (2S,4S)-4-hydroxy-2,3,4,5-tetrahydrodipicolinate + H2O + H(+). Its pathway is amino-acid biosynthesis; L-lysine biosynthesis via DAP pathway; (S)-tetrahydrodipicolinate from L-aspartate: step 3/4. Its function is as follows. Catalyzes the condensation of (S)-aspartate-beta-semialdehyde [(S)-ASA] and pyruvate to 4-hydroxy-tetrahydrodipicolinate (HTPA). The polypeptide is 4-hydroxy-tetrahydrodipicolinate synthase (Leptothrix cholodnii (strain ATCC 51168 / LMG 8142 / SP-6) (Leptothrix discophora (strain SP-6))).